Reading from the N-terminus, the 178-residue chain is Protein GrpE (178 aa).

This sequence belongs to the GrpE family. As to quaternary structure, homodimer.

The protein resides in the cytoplasm. Functionally, participates actively in the response to hyperosmotic and heat shock by preventing the aggregation of stress-denatured proteins, in association with DnaK and GrpE. It is the nucleotide exchange factor for DnaK and may function as a thermosensor. Unfolded proteins bind initially to DnaJ; upon interaction with the DnaJ-bound protein, DnaK hydrolyzes its bound ATP, resulting in the formation of a stable complex. GrpE releases ADP from DnaK; ATP binding to DnaK triggers the release of the substrate protein, thus completing the reaction cycle. Several rounds of ATP-dependent interactions between DnaJ, DnaK and GrpE are required for fully efficient folding. The chain is Protein GrpE from Rickettsia prowazekii (strain Madrid E).